The sequence spans 551 residues: Glucans biosynthesis protein D (551 aa).

Residues Met1–Ala32 constitute a signal peptide (tat-type signal).

It belongs to the OpgD/OpgG family. In terms of processing, predicted to be exported by the Tat system. The position of the signal peptide cleavage has not been experimentally proven.

The protein resides in the periplasm. Its pathway is glycan metabolism; osmoregulated periplasmic glucan (OPG) biosynthesis. Its function is as follows. Probably involved in the control of the structural glucose backbone of osmoregulated periplasmic glucans (OPGs). This Enterobacter sp. (strain 638) protein is Glucans biosynthesis protein D.